We begin with the raw amino-acid sequence, 694 residues long: Inactive protein-arginine deiminase type-6 (694 aa).

Residues Ser10 and Ser446 each carry the phosphoserine modification.

The protein belongs to the protein arginine deiminase family. As to quaternary structure, homodimers. Associates with alpha-tubulin. Post-translationally, phosphorylation at Ser-10, possibly by RSK-type kinases, and Ser-446 creates binding sites for 14-3-3 proteins. In terms of tissue distribution, highly expressed in oocytes and weakly expressed in other somatic tissues.

The protein resides in the cytoplasm. Its subcellular location is the cytoplasmic vesicle. It is found in the secretory vesicle. It localises to the cortical granule. The protein localises to the nucleus. Its function is as follows. Structural constituent of cytoplasmic lattices, which plays a key role in early embryonic development. Cytoplasmic lattices consist in fibrous structures found in the cytoplasm of oocytes and preimplantation embryos. They are required to store maternal proteins critical for embryonic development, such as ribosomal proteins and proteins that control epigenetic reprogramming of the preimplantation embryo, and prevent their degradation or activation. In contrast to other members of the family, does not show protein-arginine deiminase activity due to its inability to bind Ca(2+). In Homo sapiens (Human), this protein is Inactive protein-arginine deiminase type-6.